The following is an 895-amino-acid chain: Catenin alpha-3 (895 aa).

S56 is subject to Phosphoserine. Residues 74–111 (EKIAQEATVLKDELTASLEEVRKESEALKVSAERFTDD) adopt a coiled-coil conformation. S160 is modified (phosphoserine). A coiled-coil region spans residues 325 to 379 (RERIIAECNAIRQALQDLLSEYMNNAGKKERSNTLNIALDNMCKKTRDLRRQLRK). Phosphoserine is present on residues S637 and S647. At T649 the chain carries Phosphothreonine.

Belongs to the vinculin/alpha-catenin family. As to quaternary structure, interacts with CTNNB1. Interacts with PKP2. In terms of tissue distribution, predominantly expressed in heart and testis. Expressed at lower levels in brain, kidney, liver and skeletal muscle.

The protein resides in the cytoplasm. Its subcellular location is the cytoskeleton. The protein localises to the cell junction. It localises to the desmosome. Functionally, may be involved in formation of stretch-resistant cell-cell adhesion complexes. The chain is Catenin alpha-3 from Homo sapiens (Human).